The primary structure comprises 60 residues: Large ribosomal subunit protein bL32 (60 aa).

The span at M1–H20 shows a compositional bias: basic residues. The segment at M1–D60 is disordered. Residues I28–L44 show a composition bias toward basic and acidic residues.

Belongs to the bacterial ribosomal protein bL32 family.

The protein is Large ribosomal subunit protein bL32 of Caulobacter vibrioides (strain ATCC 19089 / CIP 103742 / CB 15) (Caulobacter crescentus).